Consider the following 312-residue polypeptide: Zinc transporter ZitB (312 aa).

A run of 5 helical transmembrane segments spans residues 21-41 (LLFA…GGIL), 48-68 (LADA…LLAV), 90-110 (AAFV…WEAI), 123-143 (LMMV…WILH), and 164-184 (LLGS…GWTP).

It belongs to the cation diffusion facilitator (CDF) transporter (TC 2.A.4) family. SLC30A subfamily.

Its subcellular location is the cell inner membrane. Its function is as follows. Involved in zinc efflux across the cytoplasmic membrane, thus reducing zinc accumulation in the cytoplasm and rendering bacteria more resistant to zinc. It may contribute to zinc homeostasis at low concentrations of zinc. The chain is Zinc transporter ZitB from Salmonella typhimurium (strain LT2 / SGSC1412 / ATCC 700720).